The sequence spans 292 residues: Small ribosomal subunit protein uS2 (292 aa).

The interval Arg230–Ala292 is disordered. Composition is skewed to basic and acidic residues over residues Glu247 to Ala259 and Pro271 to Ala292.

It belongs to the universal ribosomal protein uS2 family.

This chain is Small ribosomal subunit protein uS2, found in Thermobifida fusca (strain YX).